The sequence spans 320 residues: MIKKIGVLTSGGDAPGMNAAIRGVVRTALSEGLEVFGVYDGYLGLYEGRIEKLDRSSVSDVINKGGTFLGSARFPEFKQVEVREKAIENLKKHGIDALVVIGGDGSYMGAKKLTEMGYPCIGLPGTIDNDIAGTDYTVGYLSALNTVIDAIDRLRDTSSSHQRISIVEIMGRHCGDLTLMSAIAGGCEYIITPETGLDKDKLISNIQDGIAKGKKHAIIALTELMMDANELARDIEAATGRETRATVLGHIQRGGRPTAFDRVLASRMGNYAVHLLLEGHGGRCVGIVKEQLVHHDIIDAIENMKRPVRNDLYKVAEELF.

G12 lines the ATP pocket. An ADP-binding site is contributed by 22 to 26; sequence RGVVR. ATP-binding positions include 73-74 and 103-106; these read RF and GDGS. D104 is a Mg(2+) binding site. Substrate is bound at residue 126 to 128; the sequence is TID. Catalysis depends on D128, which acts as the Proton acceptor. Position 155 (R155) interacts with ADP. Residues R163 and 170–172 contribute to the substrate site; that span reads MGR. ADP contacts are provided by residues 186-188, K212, and 214-216; these read GCE and KKH. Residues E223, R244, and 250–253 contribute to the substrate site; that span reads HIQR.

This sequence belongs to the phosphofructokinase type A (PFKA) family. ATP-dependent PFK group I subfamily. Prokaryotic clade 'B1' sub-subfamily. In terms of assembly, homotetramer. The cofactor is Mg(2+).

It localises to the cytoplasm. It catalyses the reaction beta-D-fructose 6-phosphate + ATP = beta-D-fructose 1,6-bisphosphate + ADP + H(+). The protein operates within carbohydrate degradation; glycolysis; D-glyceraldehyde 3-phosphate and glycerone phosphate from D-glucose: step 3/4. Allosterically activated by ADP and other diphosphonucleosides, and allosterically inhibited by phosphoenolpyruvate. Functionally, catalyzes the phosphorylation of D-fructose 6-phosphate to fructose 1,6-bisphosphate by ATP, the first committing step of glycolysis. The protein is ATP-dependent 6-phosphofructokinase of Vibrio parahaemolyticus serotype O3:K6 (strain RIMD 2210633).